Here is a 251-residue protein sequence, read N- to C-terminus: NADPH-dependent oxidoreductase (251 aa).

It belongs to the flavin oxidoreductase frp family. Requires FMN as cofactor.

Its function is as follows. Reduces FMN, organic nitro compounds and disulfide DTNB. Involved in maintenance of the cellular redox state and the disulfide stress response. This chain is NADPH-dependent oxidoreductase (nfrA), found in Staphylococcus aureus (strain MSSA476).